The primary structure comprises 108 residues: Thioredoxin (108 aa).

Positions 2 to 108 constitute a Thioredoxin domain; that stretch reads GKYFEATDKN…IAKKIDEHIG (107 aa). Cys32 and Cys35 are joined by a disulfide.

The protein belongs to the thioredoxin family.

Participates in various redox reactions through the reversible oxidation of its active center dithiol to a disulfide and catalyzes dithiol-disulfide exchange reactions. The sequence is that of Thioredoxin (trxA) from Chlorobaculum thiosulfatiphilum (Chlorobium limicola f.sp. thiosulfatophilum).